Consider the following 204-residue polypeptide: Regulatory protein RecX (204 aa).

Residues 1 to 22 (MTKSSRPQSISDSVSVAGSQGT) show a composition bias toward polar residues. Positions 1-44 (MTKSSRPQSISDSVSVAGSQGTLDDLRARVASVPEAPTREPVDS) are disordered.

This sequence belongs to the RecX family.

Its subcellular location is the cytoplasm. In terms of biological role, modulates RecA activity. In Mycobacteroides abscessus (strain ATCC 19977 / DSM 44196 / CCUG 20993 / CIP 104536 / JCM 13569 / NCTC 13031 / TMC 1543 / L948) (Mycobacterium abscessus), this protein is Regulatory protein RecX.